The following is a 203-amino-acid chain: Guanylate kinase (203 aa).

One can recognise a Guanylate kinase-like domain in the interval glycine 3–glutamine 181. Residue alanine 10–threonine 17 coordinates ATP.

Belongs to the guanylate kinase family.

It localises to the cytoplasm. It carries out the reaction GMP + ATP = GDP + ADP. Functionally, essential for recycling GMP and indirectly, cGMP. The sequence is that of Guanylate kinase from Nitrosococcus oceani (strain ATCC 19707 / BCRC 17464 / JCM 30415 / NCIMB 11848 / C-107).